The sequence spans 957 residues: Glycine dehydrogenase (decarboxylating) (957 aa).

An N6-(pyridoxal phosphate)lysine modification is found at Lys-708.

Belongs to the GcvP family. In terms of assembly, the glycine cleavage system is composed of four proteins: P, T, L and H. It depends on pyridoxal 5'-phosphate as a cofactor.

It carries out the reaction N(6)-[(R)-lipoyl]-L-lysyl-[glycine-cleavage complex H protein] + glycine + H(+) = N(6)-[(R)-S(8)-aminomethyldihydrolipoyl]-L-lysyl-[glycine-cleavage complex H protein] + CO2. The glycine cleavage system catalyzes the degradation of glycine. The P protein binds the alpha-amino group of glycine through its pyridoxal phosphate cofactor; CO(2) is released and the remaining methylamine moiety is then transferred to the lipoamide cofactor of the H protein. This is Glycine dehydrogenase (decarboxylating) from Salmonella newport (strain SL254).